We begin with the raw amino-acid sequence, 127 residues long: Ribonuclease P protein component 1 (127 aa).

Belongs to the eukaryotic/archaeal RNase P protein component 1 family. Consists of a catalytic RNA component and at least 5 protein subunits. Forms a heterodimeric subcomplex with Rnp4. Reconstituted enzyme missing individual protein subunits is suboptimally active, showing each subunit contributes to optimization of activity.

It localises to the cytoplasm. It carries out the reaction Endonucleolytic cleavage of RNA, removing 5'-extranucleotides from tRNA precursor.. Its function is as follows. Part of ribonuclease P (RNase P), a protein complex that generates mature tRNA molecules by cleaving their 5'-ends. Binds RNase P RNA. This Pyrococcus horikoshii (strain ATCC 700860 / DSM 12428 / JCM 9974 / NBRC 100139 / OT-3) protein is Ribonuclease P protein component 1.